A 344-amino-acid chain; its full sequence is Biotin synthase (344 aa).

A Radical SAM core domain is found at 40–267 (AEVQVSTLLS…KSMVRLSAGR (228 aa)). The [4Fe-4S] cluster site is built by Cys55, Cys59, and Cys62. Positions 99, 130, 190, and 262 each coordinate [2Fe-2S] cluster.

Belongs to the radical SAM superfamily. Biotin synthase family. Homodimer. It depends on [4Fe-4S] cluster as a cofactor. Requires [2Fe-2S] cluster as cofactor.

The catalysed reaction is (4R,5S)-dethiobiotin + (sulfur carrier)-SH + 2 reduced [2Fe-2S]-[ferredoxin] + 2 S-adenosyl-L-methionine = (sulfur carrier)-H + biotin + 2 5'-deoxyadenosine + 2 L-methionine + 2 oxidized [2Fe-2S]-[ferredoxin]. It participates in cofactor biosynthesis; biotin biosynthesis; biotin from 7,8-diaminononanoate: step 2/2. Catalyzes the conversion of dethiobiotin (DTB) to biotin by the insertion of a sulfur atom into dethiobiotin via a radical-based mechanism. The protein is Biotin synthase of Xanthomonas oryzae pv. oryzae (strain PXO99A).